Here is a 425-residue protein sequence, read N- to C-terminus: Inositol hexakisphosphate kinase 2 (425 aa).

ATP is bound by residues 206–208 (ENL) and Asp-219. Residues 215–223 (PCVLDLKMG), Lys-221, and 235–242 (KAANQIRK) contribute to the substrate site. Asp-382 contributes to the ATP binding site. His-385 is a binding site for substrate.

The protein belongs to the inositol phosphokinase (IPK) family. As to expression, detected in kidney, intestine, liver and heart.

It localises to the nucleus. It catalyses the reaction 1D-myo-inositol hexakisphosphate + ATP = 5-diphospho-1D-myo-inositol 1,2,3,4,6-pentakisphosphate + ADP. It participates in phospholipid metabolism; phosphatidylinositol metabolism. Converts inositol hexakisphosphate (InsP6) to diphosphoinositol pentakisphosphate (InsP7/PP-InsP5). The polypeptide is Inositol hexakisphosphate kinase 2 (IP6K2) (Oryctolagus cuniculus (Rabbit)).